Reading from the N-terminus, the 330-residue chain is Aspartate--ammonia ligase (330 aa).

This sequence belongs to the class-II aminoacyl-tRNA synthetase family. AsnA subfamily.

The protein localises to the cytoplasm. The enzyme catalyses L-aspartate + NH4(+) + ATP = L-asparagine + AMP + diphosphate + H(+). The protein operates within amino-acid biosynthesis; L-asparagine biosynthesis; L-asparagine from L-aspartate (ammonia route): step 1/1. This is Aspartate--ammonia ligase from Escherichia coli (strain SMS-3-5 / SECEC).